Consider the following 506-residue polypeptide: Maturase K (506 aa).

It belongs to the intron maturase 2 family. MatK subfamily.

It localises to the plastid. It is found in the chloroplast. Functionally, usually encoded in the trnK tRNA gene intron. Probably assists in splicing its own and other chloroplast group II introns. This is Maturase K from Medicago sativa (Alfalfa).